We begin with the raw amino-acid sequence, 344 residues long: Aspartate-semialdehyde dehydrogenase (344 aa).

Residues 10–13 (TGQV) and 38–39 (RS) contribute to the NADP(+) site. Arginine 101 lines the phosphate pocket. Cysteine 131 functions as the Acyl-thioester intermediate in the catalytic mechanism. Position 158 (glutamine 158) interacts with substrate. 161-162 (SG) contacts NADP(+). Residue lysine 228 coordinates phosphate. Residue arginine 250 coordinates substrate. The active-site Proton acceptor is the histidine 257. Asparagine 326 is an NADP(+) binding site.

The protein belongs to the aspartate-semialdehyde dehydrogenase family. In terms of assembly, homodimer.

It carries out the reaction L-aspartate 4-semialdehyde + phosphate + NADP(+) = 4-phospho-L-aspartate + NADPH + H(+). It functions in the pathway amino-acid biosynthesis; L-lysine biosynthesis via DAP pathway; (S)-tetrahydrodipicolinate from L-aspartate: step 2/4. It participates in amino-acid biosynthesis; L-methionine biosynthesis via de novo pathway; L-homoserine from L-aspartate: step 2/3. Its pathway is amino-acid biosynthesis; L-threonine biosynthesis; L-threonine from L-aspartate: step 2/5. In terms of biological role, catalyzes the NADPH-dependent formation of L-aspartate-semialdehyde (L-ASA) by the reductive dephosphorylation of L-aspartyl-4-phosphate. In Corynebacterium glutamicum (strain ATCC 13032 / DSM 20300 / JCM 1318 / BCRC 11384 / CCUG 27702 / LMG 3730 / NBRC 12168 / NCIMB 10025 / NRRL B-2784 / 534), this protein is Aspartate-semialdehyde dehydrogenase.